The sequence spans 149 residues: D-aminoacyl-tRNA deacylase (149 aa).

Residues G137–P138 carry the Gly-cisPro motif, important for rejection of L-amino acids motif.

The protein belongs to the DTD family. In terms of assembly, homodimer.

It localises to the cytoplasm. It catalyses the reaction glycyl-tRNA(Ala) + H2O = tRNA(Ala) + glycine + H(+). It carries out the reaction a D-aminoacyl-tRNA + H2O = a tRNA + a D-alpha-amino acid + H(+). Its function is as follows. An aminoacyl-tRNA editing enzyme that deacylates mischarged D-aminoacyl-tRNAs. Also deacylates mischarged glycyl-tRNA(Ala), protecting cells against glycine mischarging by AlaRS. Acts via tRNA-based rather than protein-based catalysis; rejects L-amino acids rather than detecting D-amino acids in the active site. By recycling D-aminoacyl-tRNA to D-amino acids and free tRNA molecules, this enzyme counteracts the toxicity associated with the formation of D-aminoacyl-tRNA entities in vivo and helps enforce protein L-homochirality. The protein is D-aminoacyl-tRNA deacylase of Clostridium kluyveri (strain ATCC 8527 / DSM 555 / NBRC 12016 / NCIMB 10680 / K1).